Reading from the N-terminus, the 720-residue chain is Inactive serine protease PAMR1 (720 aa).

An N-terminal signal peptide occupies residues 1 to 21 (MELGCWTQLGLTFLQLLLISS). Intrachain disulfides connect Cys-128–Cys-150, Cys-177–Cys-199, Cys-239–Cys-250, Cys-244–Cys-260, Cys-262–Cys-271, Cys-280–Cys-329, Cys-315–Cys-342, Cys-414–Cys-442, and Cys-489–Cys-505. In terms of domain architecture, CUB spans 128-236 (CGQVLRAPKG…DGFHAIYEEI (109 aa)). Residues 235–272 (EITACSSSPCFHDGTCVLDKAGSYKCACLAGYTGQRCE) enclose the EGF-like domain. 2 Sushi domains span residues 278 to 344 (RNCS…ICIK) and 387 to 444 (APTK…SCIP). The 276-residue stretch at 445 to 720 (ICGKIENITA…FKDWIERNMK (276 aa)) folds into the Peptidase S1 domain. Asn-614 carries N-linked (GlcNAc...) asparagine glycosylation. Disulfide bonds link Cys-630/Cys-649 and Cys-661/Cys-697.

This sequence belongs to the peptidase S1 family.

Its subcellular location is the secreted. May play a role in regeneration of skeletal muscle. This is Inactive serine protease PAMR1 (PAMR1) from Homo sapiens (Human).